Here is a 228-residue protein sequence, read N- to C-terminus: Urease accessory protein UreF 1 (228 aa).

The protein belongs to the UreF family. As to quaternary structure, ureD, UreF and UreG form a complex that acts as a GTP-hydrolysis-dependent molecular chaperone, activating the urease apoprotein by helping to assemble the nickel containing metallocenter of UreC. The UreE protein probably delivers the nickel.

The protein localises to the cytoplasm. Functionally, required for maturation of urease via the functional incorporation of the urease nickel metallocenter. Its function is as follows. Disruption of the ure1 gene cluster suggests that it protects brucellae during their passage through the stomach. The major route of infection in human brucellosis is oral. The sequence is that of Urease accessory protein UreF 1 from Brucella abortus (strain 2308).